Here is a 367-residue protein sequence, read N- to C-terminus: Glutamate 5-kinase (367 aa).

Residue Lys-9 coordinates ATP. Substrate is bound by residues Ser-49, Asp-136, and Asn-148. ATP is bound by residues 168–169 and 210–216; these read TD and TGGMKSK. Residues 276 to 350 enclose the PUA domain; that stretch reads SGQIEVDAGA…GMQSQDIQVR (75 aa).

The protein belongs to the glutamate 5-kinase family.

It is found in the cytoplasm. It carries out the reaction L-glutamate + ATP = L-glutamyl 5-phosphate + ADP. The protein operates within amino-acid biosynthesis; L-proline biosynthesis; L-glutamate 5-semialdehyde from L-glutamate: step 1/2. Its function is as follows. Catalyzes the transfer of a phosphate group to glutamate to form L-glutamate 5-phosphate. The sequence is that of Glutamate 5-kinase from Bacillus cereus (strain G9842).